We begin with the raw amino-acid sequence, 141 residues long: Nucleoside diphosphate kinase (141 aa).

Positions 11, 59, 87, 93, 104, and 114 each coordinate ATP. H117 (pros-phosphohistidine intermediate) is an active-site residue.

The protein belongs to the NDK family. In terms of assembly, homotetramer. The cofactor is Mg(2+).

Its subcellular location is the cytoplasm. It carries out the reaction a 2'-deoxyribonucleoside 5'-diphosphate + ATP = a 2'-deoxyribonucleoside 5'-triphosphate + ADP. The enzyme catalyses a ribonucleoside 5'-diphosphate + ATP = a ribonucleoside 5'-triphosphate + ADP. Its function is as follows. Major role in the synthesis of nucleoside triphosphates other than ATP. The ATP gamma phosphate is transferred to the NDP beta phosphate via a ping-pong mechanism, using a phosphorylated active-site intermediate. The chain is Nucleoside diphosphate kinase from Bordetella bronchiseptica (strain ATCC BAA-588 / NCTC 13252 / RB50) (Alcaligenes bronchisepticus).